Consider the following 865-residue polypeptide: Alanine--tRNA ligase (865 aa).

Zn(2+) contacts are provided by His552, His556, Cys654, and His658.

This sequence belongs to the class-II aminoacyl-tRNA synthetase family. It depends on Zn(2+) as a cofactor.

It localises to the cytoplasm. The enzyme catalyses tRNA(Ala) + L-alanine + ATP = L-alanyl-tRNA(Ala) + AMP + diphosphate. Catalyzes the attachment of alanine to tRNA(Ala) in a two-step reaction: alanine is first activated by ATP to form Ala-AMP and then transferred to the acceptor end of tRNA(Ala). Also edits incorrectly charged Ser-tRNA(Ala) and Gly-tRNA(Ala) via its editing domain. This is Alanine--tRNA ligase from Coxiella burnetii (strain RSA 331 / Henzerling II).